Here is a 96-residue protein sequence, read N- to C-terminus: Protein Vpr (96 aa).

The tract at residues 1 to 42 (MEQAPEDQGPQREPYNEWTLELLEELKREAVRHFPRPWLHGL) is homooligomerization. Residues Ser-79, Ser-94, and Ser-96 each carry the phosphoserine; by host modification.

The protein belongs to the HIV-1 VPR protein family. In terms of assembly, homooligomer, may form homodimer. Interacts with p6-gag region of the Pr55 Gag precursor protein through a (Leu-X-X)4 motif near the C-terminus of the P6gag protein. Interacts with host UNG. May interact with host RAD23A/HHR23A. Interacts with host VPRBP/DCAF1, leading to hijack the CUL4A-RBX1-DDB1-DCAF1/VPRBP complex, mediating ubiquitination of host proteins such as TERT and ZGPAT and arrest of the cell cycle in G2 phase. Phosphorylated on several residues by host. These phosphorylations regulate VPR activity for the nuclear import of the HIV-1 pre-integration complex.

It is found in the virion. The protein resides in the host nucleus. The protein localises to the host extracellular space. In terms of biological role, during virus replication, may deplete host UNG protein, and incude G2-M cell cycle arrest. Acts by targeting specific host proteins for degradation by the 26S proteasome, through association with the cellular CUL4A-DDB1 E3 ligase complex by direct interaction with host VPRPB/DCAF-1. Cell cycle arrest reportedly occurs within hours of infection and is not blocked by antiviral agents, suggesting that it is initiated by the VPR carried into the virion. Additionally, VPR induces apoptosis in a cell cycle dependent manner suggesting that these two effects are mechanistically linked. Detected in the serum and cerebrospinal fluid of AIDS patient, VPR may also induce cell death to bystander cells. During virus entry, plays a role in the transport of the viral pre-integration (PIC) complex to the host nucleus. This function is crucial for viral infection of non-dividing macrophages. May act directly at the nuclear pore complex, by binding nucleoporins phenylalanine-glycine (FG)-repeat regions. The chain is Protein Vpr from Human immunodeficiency virus type 1 group M subtype C (isolate 92BR025) (HIV-1).